The following is a 1327-amino-acid chain: ABC transporter 1 (1327 aa).

The next 6 helical transmembrane spans lie at 47-67 (LGIL…IIFG), 100-120 (VYVG…WNLF), 170-190 (KVGI…IAFV), 195-215 (LGGE…VGGY), 228-248 (VAGA…VHAF), and 276-296 (VAVQ…LAFW). The ABC transmembrane type-1 1 domain occupies 47–326 (LGILAAIASG…TTYTVIFLLV (280 aa)). N-linked (GlcNAc...) asparagine glycans are attached at residues Asn-381, Asn-390, and Asn-406. Residues 386 to 663 (IELNNVSFAF…DGAYAGLVRL (278 aa)) enclose the ABC transporter 1 domain. 421–428 (GLSGSGKS) lines the ATP pocket. Residues Asn-463 and Asn-674 are each glycosylated (N-linked (GlcNAc...) asparagine). A run of 6 helical transmembrane segments spans residues 743–763 (FLAL…AVVF), 785–805 (FYGL…LGSW), 859–881 (LTGS…IALS), 888–910 (IALV…VITM), 971–991 (LWLA…YWWG), and 1005–1025 (FFIV…MFTL). The region spanning 743–1031 (FLALTSAFVV…MFTLAPDVSR (289 aa)) is the ABC transmembrane type-1 2 domain. Asn-1050 is a glycosylation site (N-linked (GlcNAc...) asparagine). The tract at residues 1054–1081 (PCQHLKPGNDLEANAEPREKRPDQSQGG) is disordered. One can recognise an ABC transporter 2 domain in the interval 1084–1323 (VSLNNVKFSY…SESYKINALH (240 aa)). ATP is bound at residue 1119 to 1126 (GPSGAGKS).

The protein belongs to the ABC transporter superfamily. ABCB family. Multidrug resistance exporter (TC 3.A.1.201) subfamily.

The protein localises to the membrane. ABC transporter; part of the gene cluster that mediates the biosynthesis of hydroxamate-containing siderophores that play a critical role in virulence via intracellular iron acquisition during macrophage infection. Probably involved in the excretion of the extracellular siderophores. The sequence is that of ABC transporter 1 from Ajellomyces capsulatus (Darling's disease fungus).